The primary structure comprises 475 residues: Melanopsin (475 aa).

The Extracellular portion of the chain corresponds to M1–S21. A helical transmembrane segment spans residues C22 to Y42. Topologically, residues S43–Y53 are cytoplasmic. The helical transmembrane segment at F54–F74 threads the bilayer. The Extracellular portion of the chain corresponds to L75–N90. An intrachain disulfide couples C89 to C167. The chain crosses the membrane as a helical span at residues F91–S111. Over V112 to C134 the chain is Cytoplasmic. Residues I135–W155 form a helical membrane-spanning segment. The Extracellular portion of the chain corresponds to S156 to C187. N178 carries an N-linked (GlcNAc...) asparagine glycan. Residues F188–I208 form a helical membrane-spanning segment. The Cytoplasmic portion of the chain corresponds to R209–K240. Residues I241 to L261 traverse the membrane as a helical segment. Residues I262–K276 are Extracellular-facing. A helical membrane pass occupies residues S277–I297. K284 carries the post-translational modification N6-(retinylidene)lysine. Residues H298–H475 are Cytoplasmic-facing. 2 disordered regions span residues V370–E390 and P445–H475. Over residues K375–S384 the composition is skewed to basic residues. Positions P445–E454 are enriched in polar residues. The span at E455–V464 shows a compositional bias: acidic residues. Basic and acidic residues predominate over residues Q465–H475.

This sequence belongs to the G-protein coupled receptor 1 family. Opsin subfamily. Highest level in the lateral eye. Low level in the brain.

The protein resides in the cell membrane. Functionally, photoreceptor implicated in non-image-forming responses to light. May be able to isomerize covalently bound all-trans retinal back to 11-cis retinal. This is Melanopsin (OPN4) from Podarcis siculus (Italian wall lizard).